The chain runs to 503 residues: UDP-N-acetylmuramoyl-L-alanyl-D-glutamate--2,6-diaminopimelate ligase (503 aa).

Ser32 contacts UDP-N-acetyl-alpha-D-muramoyl-L-alanyl-D-glutamate. 117–123 (GTNGKTT) contacts ATP. UDP-N-acetyl-alpha-D-muramoyl-L-alanyl-D-glutamate-binding positions include 159 to 160 (TT), Ser186, Gln192, and Arg194. Lys226 is modified (N6-carboxylysine). Meso-2,6-diaminopimelate contacts are provided by residues Arg396, 420–423 (DNPR), Gly471, and Glu475. Positions 420–423 (DNPR) match the Meso-diaminopimelate recognition motif motif.

It belongs to the MurCDEF family. MurE subfamily. Mg(2+) serves as cofactor. Carboxylation is probably crucial for Mg(2+) binding and, consequently, for the gamma-phosphate positioning of ATP.

Its subcellular location is the cytoplasm. It catalyses the reaction UDP-N-acetyl-alpha-D-muramoyl-L-alanyl-D-glutamate + meso-2,6-diaminopimelate + ATP = UDP-N-acetyl-alpha-D-muramoyl-L-alanyl-gamma-D-glutamyl-meso-2,6-diaminopimelate + ADP + phosphate + H(+). It participates in cell wall biogenesis; peptidoglycan biosynthesis. In terms of biological role, catalyzes the addition of meso-diaminopimelic acid to the nucleotide precursor UDP-N-acetylmuramoyl-L-alanyl-D-glutamate (UMAG) in the biosynthesis of bacterial cell-wall peptidoglycan. In Prochlorococcus marinus (strain SARG / CCMP1375 / SS120), this protein is UDP-N-acetylmuramoyl-L-alanyl-D-glutamate--2,6-diaminopimelate ligase.